We begin with the raw amino-acid sequence, 170 residues long: Protein SprT (170 aa).

The 141-residue stretch at 25 to 165 (SEQFFDRTFA…QYCKGRLEPV (141 aa)) folds into the SprT-like domain. His-78 is a Zn(2+) binding site. Glu-79 is a catalytic residue. A Zn(2+)-binding site is contributed by His-82.

Belongs to the SprT family. It depends on Zn(2+) as a cofactor.

Its subcellular location is the cytoplasm. The chain is Protein SprT from Actinobacillus succinogenes (strain ATCC 55618 / DSM 22257 / CCUG 43843 / 130Z).